The chain runs to 460 residues: Acetyl-coenzyme A carboxylase carboxyl transferase subunit beta, chloroplastic (460 aa).

One can recognise a CoA carboxyltransferase N-terminal domain in the interval 179–460 (LWVQCESCYG…GFFPLTQNGN (282 aa)). Residues cysteine 183, cysteine 186, cysteine 202, and cysteine 205 each coordinate Zn(2+). The segment at 183–205 (CESCYGLNYKKFFKSKMNICEHC) adopts a C4-type zinc-finger fold.

Belongs to the AccD/PCCB family. As to quaternary structure, acetyl-CoA carboxylase is a heterohexamer composed of biotin carboxyl carrier protein, biotin carboxylase and 2 subunits each of ACCase subunit alpha and ACCase plastid-coded subunit beta (accD). Zn(2+) serves as cofactor.

It localises to the plastid. The protein localises to the chloroplast stroma. The catalysed reaction is N(6)-carboxybiotinyl-L-lysyl-[protein] + acetyl-CoA = N(6)-biotinyl-L-lysyl-[protein] + malonyl-CoA. The protein operates within lipid metabolism; malonyl-CoA biosynthesis; malonyl-CoA from acetyl-CoA: step 1/1. Component of the acetyl coenzyme A carboxylase (ACC) complex. Biotin carboxylase (BC) catalyzes the carboxylation of biotin on its carrier protein (BCCP) and then the CO(2) group is transferred by the transcarboxylase to acetyl-CoA to form malonyl-CoA. The protein is Acetyl-coenzyme A carboxylase carboxyl transferase subunit beta, chloroplastic of Cicer arietinum (Chickpea).